A 762-amino-acid polypeptide reads, in one-letter code: Putative BTB/POZ domain-containing protein L272 (762 aa).

The BTB domain maps to 16–86 (TDITIILKDE…FYGQKIKSHN (71 aa)). Residues 390–410 (DLDNSNDLNDSNDLDDSDDSN) are compositionally biased toward acidic residues. Disordered stretches follow at residues 390-411 (DLDN…DSND) and 532-556 (ISDN…NSDN). Residues 532-543 (ISDNSDNLNNSD) are compositionally biased toward low complexity. Residues 737–762 (FSENYCDELINRLNNALKKIEQKYPN) adopt a coiled-coil conformation.

Belongs to the mimivirus BTB/WD family.

The polypeptide is Putative BTB/POZ domain-containing protein L272 (Acanthamoeba polyphaga (Amoeba)).